The sequence spans 208 residues: Large ribosomal subunit protein uL4 (208 aa).

A disordered region spans residues 45–83; sequence RQGTHKSKTRAEVRGGGRKPYRQKGTGNARQGSTRSPLM. Residues 69–80 show a composition bias toward polar residues; the sequence is GTGNARQGSTRS.

The protein belongs to the universal ribosomal protein uL4 family. In terms of assembly, part of the 50S ribosomal subunit.

In terms of biological role, one of the primary rRNA binding proteins, this protein initially binds near the 5'-end of the 23S rRNA. It is important during the early stages of 50S assembly. It makes multiple contacts with different domains of the 23S rRNA in the assembled 50S subunit and ribosome. Its function is as follows. Forms part of the polypeptide exit tunnel. This Chlorobium luteolum (strain DSM 273 / BCRC 81028 / 2530) (Pelodictyon luteolum) protein is Large ribosomal subunit protein uL4.